Consider the following 244-residue polypeptide: Precorrin-6A reductase (244 aa).

Belongs to the precorrin-6x reductase family.

The catalysed reaction is precorrin-6B + NADP(+) = precorrin-6A + NADPH + 2 H(+). It participates in cofactor biosynthesis; adenosylcobalamin biosynthesis; cob(II)yrinate a,c-diamide from precorrin-2 (aerobic route): step 6/10. In terms of biological role, catalyzes the reduction of the macrocycle of precorrin-6X into precorrin-6Y. The sequence is that of Precorrin-6A reductase (cobK) from Mycobacterium tuberculosis (strain CDC 1551 / Oshkosh).